We begin with the raw amino-acid sequence, 308 residues long: Probable GTP 3',8-cyclase (308 aa).

Residues 4–224 (RFGRPLEDLR…QIRKKHFRPR (221 aa)) enclose the Radical SAM core domain. GTP is bound at residue Arg-13. Residues Cys-20, Cys-24, and Cys-27 each contribute to the [4Fe-4S] cluster site. Lys-60 is a binding site for GTP. S-adenosyl-L-methionine is bound at residue Gly-64. Thr-90 contacts GTP. Position 114 (Ser-114) interacts with S-adenosyl-L-methionine. Lys-151 is a GTP binding site. Positions 245 and 248 each coordinate [4Fe-4S] cluster. Position 250 to 252 (250 to 252 (RIR)) interacts with GTP. Residue Cys-262 participates in [4Fe-4S] cluster binding.

This sequence belongs to the radical SAM superfamily. MoaA family. The cofactor is [4Fe-4S] cluster.

It carries out the reaction GTP + AH2 + S-adenosyl-L-methionine = (8S)-3',8-cyclo-7,8-dihydroguanosine 5'-triphosphate + 5'-deoxyadenosine + L-methionine + A + H(+). It participates in cofactor biosynthesis; molybdopterin biosynthesis. Catalyzes the cyclization of GTP to (8S)-3',8-cyclo-7,8-dihydroguanosine 5'-triphosphate. The sequence is that of Probable GTP 3',8-cyclase from Saccharolobus islandicus (strain Y.N.15.51 / Yellowstone #2) (Sulfolobus islandicus).